We begin with the raw amino-acid sequence, 103 residues long: MAVQQKIRIKLKSYDHSLVDKWALKIIDVVKQTEAIIFGPIPLPTKTHVYTVNRSPHVDKKSREQFAFSSHKRLIEIINPTARTIDMLMKLELPSGVDVEIKS.

This sequence belongs to the universal ribosomal protein uS10 family. Part of the 30S ribosomal subunit.

Functionally, involved in the binding of tRNA to the ribosomes. This is Small ribosomal subunit protein uS10 from Chlorobaculum tepidum (strain ATCC 49652 / DSM 12025 / NBRC 103806 / TLS) (Chlorobium tepidum).